Consider the following 397-residue polypeptide: MAKAKFERTKPHVNIGTIGHVDHGKTTLTAAISRVLSERLPSNTNVKQDFDAIDSAPEERQRGITINISHIEYETEKRHYAHVDAPGHADYIKNMITGAAQMDGAILVVAATDGAMAQTREHVLLAKQVGVPYLLVALNKADMVSDEEILELVELEVRELLSNHGFDGENVPVVRVSGLKALEGDQKWGDAVMELMKAVDESIPDPVRDRDKPFLMPIEDVFTITGRGTVVTGRAERGVLAVNSEVEIVGIRPTQKTTVTGIEMFRKQLDEAWAGENCGLLLRGTKREDVERGQVVVKPGSVTPHTKFEGKAYILSKDEGGRHNPFYSNYRPQFYFRTTDVTGVITLPEGTEMVMPGDTISITVDLIQPIAMEEGLGFAIREGGRTVGAGTVVKILE.

The tr-type G domain occupies 10-207 (KPHVNIGTIG…AVDESIPDPV (198 aa)). Residues 19–26 (GHVDHGKT) are G1. 19–26 (GHVDHGKT) lines the GTP pocket. A Mg(2+)-binding site is contributed by T26. The segment at 63–67 (GITIN) is G2. Positions 84-87 (DAPG) are G3. GTP contacts are provided by residues 84–88 (DAPGH) and 139–142 (NKAD). A G4 region spans residues 139–142 (NKAD). The G5 stretch occupies residues 177 to 179 (SGL).

The protein belongs to the TRAFAC class translation factor GTPase superfamily. Classic translation factor GTPase family. EF-Tu/EF-1A subfamily. As to quaternary structure, monomer.

It localises to the cytoplasm. It carries out the reaction GTP + H2O = GDP + phosphate + H(+). Functionally, GTP hydrolase that promotes the GTP-dependent binding of aminoacyl-tRNA to the A-site of ribosomes during protein biosynthesis. This is Elongation factor Tu from Tropheryma whipplei (strain Twist) (Whipple's bacillus).